A 383-amino-acid polypeptide reads, in one-letter code: MMKVLIAGGGTGGHLFPGIALAEEVVTRHHRNEVVFVGTERGIESRVVPKEGYPLELVKVQGLKGKGFLSLLKALFALPLAFIESFRILARQKPDVVVGVGGYASGPVVMAAWLMGIPTAIQEQNALPGFTNKVLGRIVRVVFIAFEEARAFFPEKKVQLIGNPIRRKLMDNYLRSHVAHERFSVLVFGGSLGARGINQRMTEALDSLGDLKDSLHFVHQTGKNDLESVRKGYADKGFQAEVVEFIDDMSSAYARADLVVCRAGATTLAELTVCKKASILIPFPHATDDHQAVNARALVDAGAALMFRESELTGEKLAQTVRELKSHPERLKSMEKKAGLLGRPEAAKELADVCVDLMVQTWGPNGRERTPIEAEKKAPRSNS.

Residues 11–13 (TGG), Asn-125, Arg-166, Ser-191, Ile-246, and Gln-291 contribute to the UDP-N-acetyl-alpha-D-glucosamine site. The segment at 364–383 (PNGRERTPIEAEKKAPRSNS) is disordered. Positions 366–383 (GRERTPIEAEKKAPRSNS) are enriched in basic and acidic residues.

It belongs to the glycosyltransferase 28 family. MurG subfamily.

Its subcellular location is the cell inner membrane. The enzyme catalyses di-trans,octa-cis-undecaprenyl diphospho-N-acetyl-alpha-D-muramoyl-L-alanyl-D-glutamyl-meso-2,6-diaminopimeloyl-D-alanyl-D-alanine + UDP-N-acetyl-alpha-D-glucosamine = di-trans,octa-cis-undecaprenyl diphospho-[N-acetyl-alpha-D-glucosaminyl-(1-&gt;4)]-N-acetyl-alpha-D-muramoyl-L-alanyl-D-glutamyl-meso-2,6-diaminopimeloyl-D-alanyl-D-alanine + UDP + H(+). It participates in cell wall biogenesis; peptidoglycan biosynthesis. In terms of biological role, cell wall formation. Catalyzes the transfer of a GlcNAc subunit on undecaprenyl-pyrophosphoryl-MurNAc-pentapeptide (lipid intermediate I) to form undecaprenyl-pyrophosphoryl-MurNAc-(pentapeptide)GlcNAc (lipid intermediate II). This Myxococcus xanthus (strain DK1622) protein is UDP-N-acetylglucosamine--N-acetylmuramyl-(pentapeptide) pyrophosphoryl-undecaprenol N-acetylglucosamine transferase.